A 322-amino-acid polypeptide reads, in one-letter code: Thiamine thiazole synthase (322 aa).

Substrate-binding positions include C84, 105 to 106, G113, and V178; that span reads EA. A 2,3-didehydroalanine (Cys) modification is found at C211. Residues D213, H228, M280, and 290 to 292 each bind substrate; that span reads RMG.

It belongs to the THI4 family. In terms of assembly, homooctamer. Fe cation is required as a cofactor. During the catalytic reaction, a sulfide is transferred from Cys-211 to a reaction intermediate, generating a dehydroalanine residue.

Its subcellular location is the cytoplasm. The protein resides in the nucleus. The enzyme catalyses [ADP-thiazole synthase]-L-cysteine + glycine + NAD(+) = [ADP-thiazole synthase]-dehydroalanine + ADP-5-ethyl-4-methylthiazole-2-carboxylate + nicotinamide + 3 H2O + 2 H(+). In terms of biological role, involved in biosynthesis of the thiamine precursor thiazole. Catalyzes the conversion of NAD and glycine to adenosine diphosphate 5-(2-hydroxyethyl)-4-methylthiazole-2-carboxylic acid (ADT), an adenylated thiazole intermediate. The reaction includes an iron-dependent sulfide transfer from a conserved cysteine residue of the protein to a thiazole intermediate. The enzyme can only undergo a single turnover, which suggests it is a suicide enzyme. May have additional roles in adaptation to various stress conditions and in DNA damage tolerance. This chain is Thiamine thiazole synthase, found in Fusarium vanettenii (strain ATCC MYA-4622 / CBS 123669 / FGSC 9596 / NRRL 45880 / 77-13-4) (Fusarium solani subsp. pisi).